Reading from the N-terminus, the 68-residue chain is Protein transport protein Sec61 subunit gamma (68 aa).

Residues methionine 1–glutamate 32 are Cytoplasmic-facing. A helical membrane pass occupies residues phenylalanine 33–isoleucine 61. Residues asparagine 62–glycine 68 lie on the Extracellular side of the membrane.

This sequence belongs to the SecE/SEC61-gamma family. In terms of assembly, the SEC61 channel-forming translocon complex consists of channel-forming core components SEC61A1, SEC61B and SEC61G and different auxiliary components such as SEC62 and SEC63. The SEC61 channel associates with the multi-pass translocon (MPT) complex.

The protein resides in the endoplasmic reticulum membrane. In terms of biological role, component of SEC61 channel-forming translocon complex that mediates transport of signal peptide-containing precursor polypeptides across the endoplasmic reticulum (ER). Forms a ribosome receptor and a gated pore in the ER membrane, both functions required for cotranslational translocation of nascent polypeptides. The SEC61 channel is also involved in ER membrane insertion of transmembrane proteins: it mediates membrane insertion of the first few transmembrane segments of proteins, while insertion of subsequent transmembrane regions of multi-pass membrane proteins is mediated by the multi-pass translocon (MPT) complex. This is Protein transport protein Sec61 subunit gamma (sec61g) from Harpagifer antarcticus (Antarctic spiny plunderfish).